Here is a 350-residue protein sequence, read N- to C-terminus: SUMO-activating enzyme subunit 1 (350 aa).

Met-1 is modified (N-acetylmethionine). At Val-2 the chain carries N-acetylvaline; in SUMO-activating enzyme subunit 1, N-terminally processed. Ser-16 is subject to Phosphoserine. An N6-acetyllysine modification is found at Lys-202.

This sequence belongs to the ubiquitin-activating E1 family. As to quaternary structure, heterodimer of SAE1 and UBA2/SAE2. The heterodimer corresponds to the two domains that are encoded on a single polypeptide chain in ubiquitin-activating enzyme E1. Interacts with UBE2I. In terms of tissue distribution, broadly expressed, with highest levels in testis.

It localises to the nucleus. Its pathway is protein modification; protein sumoylation. Functionally, the heterodimer acts as an E1 ligase for SUMO1, SUMO2, SUMO3, and probably SUMO4. It mediates ATP-dependent activation of SUMO proteins followed by formation of a thioester bond between a SUMO protein and a conserved active site cysteine residue on UBA2/SAE2. The protein is SUMO-activating enzyme subunit 1 (Sae1) of Mus musculus (Mouse).